The sequence spans 484 residues: Ornithine decarboxylase (484 aa).

Residue K114 is modified to N6-(pyridoxal phosphate)lysine. Residues S245, G282, and 315-318 (EPGR) each bind pyridoxal 5'-phosphate. 381–382 (FD) is a substrate binding site. The active-site Proton donor; shared with dimeric partner is C422. D423 lines the substrate pocket. Y452 is a binding site for pyridoxal 5'-phosphate.

Belongs to the Orn/Lys/Arg decarboxylase class-II family. Homodimer. Only the dimer is catalytically active, as the active sites are constructed of residues from both monomers. Requires pyridoxal 5'-phosphate as cofactor.

The protein resides in the cytoplasm. It catalyses the reaction L-ornithine + H(+) = putrescine + CO2. Its pathway is amine and polyamine biosynthesis; putrescine biosynthesis via L-ornithine pathway; putrescine from L-ornithine: step 1/1. With respect to regulation, inhibited by antizyme (AZ) OAZ1 in response to polyamine levels. AZ inhibits the assembly of the functional homodimer by binding to ODC monomers and targeting them for ubiquitin-independent proteolytic destruction by the 26S proteasome. Catalyzes the first and rate-limiting step of polyamine biosynthesis that converts ornithine into putrescine, which is the precursor for the polyamines, spermidine and spermine. Polyamines are essential for cell proliferation and are implicated in cellular processes, ranging from DNA replication to apoptosis. This chain is Ornithine decarboxylase (spe-1), found in Neurospora crassa (strain ATCC 24698 / 74-OR23-1A / CBS 708.71 / DSM 1257 / FGSC 987).